A 335-amino-acid polypeptide reads, in one-letter code: UPF0353 protein MAV335 (335 aa).

A run of 2 helical transmembrane segments spans residues 18 to 38 and 67 to 87; these read WFFLFLLVVAGLAALYILMQL and LPAILLVASLVLFTIAMAGPT. In terms of domain architecture, VWFA spans 98–295; that stretch reads VVMLVIDVSQ…QELKSVYATL (198 aa). Residues 309–329 form a helical membrane-spanning segment; sequence SVGWVRLGALVLRLAADALLI.

This sequence belongs to the UPF0353 family.

It is found in the cell membrane. The sequence is that of UPF0353 protein MAV335 from Mycobacterium avium.